The sequence spans 317 residues: Single myb histone 6 (317 aa).

One can recognise an HTH myb-type domain in the interval 1 to 61 (MGAPKQRWTS…KWRNMNVIVS (61 aa)). The H-T-H motif DNA-binding region spans 28 to 57 (WRTILKDPEFSSTLCYRSNVDLKDKWRNMN). One can recognise an H15 domain in the interval 121–189 (KSHRLDNIIM…KVNRKYRIAP (69 aa)). Residues 244–288 (VAAARAVAEAEAIMAEAEAAAKEAEAAEAEAQAAQAFAEAAFLTL) are a coiled coil.

The protein belongs to the histone H1/H5 family. SMH subfamily. Forms a homodimer and heterodimers.

The protein resides in the nucleus. Its subcellular location is the chromosome. The protein localises to the nucleolus. It localises to the telomere. Functionally, binds preferentially double-stranded telomeric repeats, but may also bind to the single telomeric strand. The sequence is that of Single myb histone 6 (SMH6) from Zea mays (Maize).